A 657-amino-acid chain; its full sequence is uncharacterized protein (657 aa).

Position 114 is a phosphoserine (Ser114). 5 disordered regions span residues 142–216 (LASQ…SDEE), 228–248 (SSRE…EEEE), 291–312 (STRS…SHTP), 335–354 (SSPG…EGAD), and 399–522 (AEAS…SGRH). Residues 143 to 169 (ASQNTDKTSQNQARELPVTENNAQNAK) are compositionally biased toward polar residues. Basic and acidic residues predominate over residues 190 to 206 (AGKERTLQTPKQKEPAR). Ser213 is modified (phosphoserine). Composition is skewed to polar residues over residues 234–243 (TNQGFSSANV) and 301–312 (SHVSSDTASHTP). The segment covering 343-354 (ETVDEPVSEGAD) has biased composition (acidic residues). Residues 437-451 (SASSASAIQQDSTSS) show a composition bias toward low complexity. The segment covering 462-484 (NTVSSAYSEDFENSPSLTASEPT) has biased composition (polar residues). The segment covering 485 to 495 (AHSKESLDRTL) has biased composition (basic and acidic residues). The segment covering 499-513 (SESSSSVKTDLPQTA) has biased composition (polar residues).

This is an uncharacterized protein from Homo sapiens (Human).